Here is a 358-residue protein sequence, read N- to C-terminus: Arogenate dehydrogenase 2, chloroplastic (358 aa).

The transit peptide at 1–36 (MLLHFSPAKPLISPPNLRRNSPTFLISPPRSLRIRA) directs the protein to the chloroplast. In terms of domain architecture, Prephenate/arogenate dehydrogenase spans 59–338 (LKIAVLGFGN…KKTEQKLLND (280 aa)). A disordered region spans residues 336-358 (LNDGGVVPMNDISSSSSSSSSSS). Over residues 348 to 358 (SSSSSSSSSSS) the composition is skewed to low complexity.

It belongs to the prephenate/arogenate dehydrogenase family. As to expression, expressed in roots, stems, leaves, flowers, siliques and seeds. More abundant in seeds.

The protein resides in the plastid. Its subcellular location is the chloroplast. It carries out the reaction L-arogenate + NADP(+) = L-tyrosine + CO2 + NADPH. It participates in amino-acid biosynthesis; L-tyrosine biosynthesis; L-tyrosine from L-arogenate (NADP(+) route): step 1/1. In terms of biological role, involved in the biosynthesis of tyrosine. Has a weak prephenate dehydrogenase activity. In Arabidopsis thaliana (Mouse-ear cress), this protein is Arogenate dehydrogenase 2, chloroplastic (TYRAAT2).